Consider the following 553-residue polypeptide: Zinc finger protein Elbow (553 aa).

Disordered stretches follow at residues 59-243 and 388-407; these read STKQ…MHSP and GGGGGGSSKSSGSQGGSGGS. 2 stretches are compositionally biased toward low complexity: residues 96 to 110 and 121 to 134; these read SPVSSHSSSVSTGSV and SSSSSKPTPTTFKP. 3 stretches are compositionally biased toward polar residues: residues 137 to 146, 153 to 173, and 224 to 236; these read PNNNISNITT, TNLSSNNTSAQQRVKTPKSMT, and TASTTPGRSNSKE. Residues 287–480 are self-association; that stretch reads SASAAAAAAS…PDAVLSAAAA (194 aa). An interaction with noc region spans residues 287–553; it reads SASAAAAAAS…YGPRMGSSHP (267 aa). A compositionally biased stretch (gly residues) spans 388–406; sequence GGGGGGSSKSSGSQGGSGG. The segment at 437-466 adopts a C2H2-type zinc-finger fold; the sequence is YVCSWIGSDAAYCGKRFGTSDDLFQHLRTH.

This sequence belongs to the Elbow/Noc family. Self-associates. Interacts with gro and noc.

Its function is as follows. May negatively regulate Notch-induced cell proliferation in the eye-head primordium. May act in leg and wing primordia to negatively regulate body-wall specifying genes and thereby promote appendage formation. Required for tracheal development. The chain is Zinc finger protein Elbow (elB) from Drosophila melanogaster (Fruit fly).